Here is a 145-residue protein sequence, read N- to C-terminus: Probable DNA-directed RNA polymerases I and III subunit RPAC2 (145 aa).

The disordered stretch occupies residues 1–52 (MGKKSEKKVVEETMEVDEQPAVEPEAVPEEEPEVEDEDLNVPKKKKMEILDP). The span at 12–39 (ETMEVDEQPAVEPEAVPEEEPEVEDEDL) shows a compositional bias: acidic residues.

It belongs to the archaeal Rpo11/eukaryotic RPB11/RPC19 RNA polymerase subunit family. As to quaternary structure, component of the RNA polymerase I (Pol I) and RNA polymerase III (Pol III) complexes consisting of at least 13 and 17 subunits, respectively.

Its subcellular location is the nucleus. Functionally, DNA-dependent RNA polymerase catalyzes the transcription of DNA into RNA using the four ribonucleoside triphosphates as substrates. Common core component of RNA polymerases I and III which synthesize ribosomal RNA precursors and small RNAs, such as 5S rRNA and tRNAs, respectively. The sequence is that of Probable DNA-directed RNA polymerases I and III subunit RPAC2 (rpac-19) from Caenorhabditis briggsae.